Reading from the N-terminus, the 499-residue chain is Lysosomal Pro-X carboxypeptidase (499 aa).

The signal sequence occupies residues 1 to 21; sequence MGRCSLLLLLLLIAFLTPGAA. Residues 22–47 constitute a propeptide that is removed on maturation; sequence NPVSPSLRAPSSLPWSTSFRSRPTIT. N-linked (GlcNAc...) asparagine glycosylation is present at N103. S181 acts as the Charge relay system in catalysis. The tract at residues 196 to 337 is SKS domain; it reads HLVVGALASS…QNIFQALNVY (142 aa). Intrachain disulfides connect C217–C375, C235–C313, C266–C346, and C367–C397. Residue N234 is glycosylated (N-linked (GlcNAc...) asparagine). 2 N-linked (GlcNAc...) asparagine glycosylation sites follow: N339 and N348. N418 carries an N-linked (GlcNAc...) asparagine glycan. Catalysis depends on charge relay system residues D433 and H458.

The protein belongs to the peptidase S28 family. As to quaternary structure, homodimer.

The protein localises to the lysosome. The catalysed reaction is Cleavage of a -Pro-|-Xaa bond to release a C-terminal amino acid.. Cleaves C-terminal amino acids linked to proline in peptides such as angiotensin II, III and des-Arg9-bradykinin. This cleavage occurs at acidic pH, but enzymatic activity is retained with some substrates at neutral pH. The chain is Lysosomal Pro-X carboxypeptidase (PRCP) from Bos taurus (Bovine).